The following is a 129-amino-acid chain: Lysozyme C (129 aa).

Residues Lys-1–Leu-129 enclose the C-type lysozyme domain. 4 cysteine pairs are disulfide-bonded: Cys-6–Cys-127, Cys-30–Cys-115, Cys-64–Cys-80, and Cys-76–Cys-94. Catalysis depends on residues Glu-35 and Asp-52.

It belongs to the glycosyl hydrolase 22 family. Monomer.

Its subcellular location is the secreted. The enzyme catalyses Hydrolysis of (1-&gt;4)-beta-linkages between N-acetylmuramic acid and N-acetyl-D-glucosamine residues in a peptidoglycan and between N-acetyl-D-glucosamine residues in chitodextrins.. Lysozymes have primarily a bacteriolytic function; those in tissues and body fluids are associated with the monocyte-macrophage system and enhance the activity of immunoagents. This chain is Lysozyme C (LYZ), found in Tragopan satyra (Satyr tragopan).